A 101-amino-acid chain; its full sequence is Large ribosomal subunit protein uL23 (101 aa).

Belongs to the universal ribosomal protein uL23 family. In terms of assembly, part of the 50S ribosomal subunit. Contacts protein L29, and trigger factor when it is bound to the ribosome.

One of the early assembly proteins it binds 23S rRNA. One of the proteins that surrounds the polypeptide exit tunnel on the outside of the ribosome. Forms the main docking site for trigger factor binding to the ribosome. The chain is Large ribosomal subunit protein uL23 from Corynebacterium efficiens (strain DSM 44549 / YS-314 / AJ 12310 / JCM 11189 / NBRC 100395).